The primary structure comprises 308 residues: Very-long-chain enoyl-CoA reductase (308 aa).

Topologically, residues 1 to 86 (MKHYEVEILD…YFRDLGAQIS (86 aa)) are cytoplasmic. At Lys22 the chain carries N6-acetyllysine. Ser58 bears the Phosphoserine mark. The residue at position 60 (Lys60) is an N6-acetyllysine. The chain crosses the membrane as a helical span at residues 87 to 106 (WVTVFLTEYAGPLFIYLLFY). Residues 107–124 (FRVPFIYGRKYDFTSSRH) lie on the Lumenal side of the membrane. The chain crosses the membrane as a helical span at residues 125-147 (TVVHLACICHSFHYIKRLLETLF). Topologically, residues 148–158 (VHRFSHGTMPL) are cytoplasmic. Residues 159–180 (RNIFKNCTYYWGFAAWMAYYIN) form a helical membrane-spanning segment. The Lumenal segment spans residues 181–189 (HPLYTPPTY). A helical membrane pass occupies residues 190–216 (GAQQVKLALAIFVICQLGNFSIHMALR). The Cytoplasmic segment spans residues 217–245 (DLRPAGSKTRKIPYPTRNPFTWLFLLVSC). The helical transmembrane segment at 246–262 (PNYTYEVGSWIGFAIMT) threads the bilayer. Topologically, residues 263-264 (QC) are lumenal. A helical transmembrane segment spans residues 265–292 (LPVALFSLVGFTQMTIWAKGKHRSYLKE). Residues 293 to 308 (FRDYPPLRMPIIPFLL) are Cytoplasmic-facing.

It belongs to the steroid 5-alpha reductase family. Interacts with ELOVL1 and LASS2. Glycosylated.

It localises to the endoplasmic reticulum membrane. The catalysed reaction is a very-long-chain 2,3-saturated fatty acyl-CoA + NADP(+) = a very-long-chain (2E)-enoyl-CoA + NADPH + H(+). The enzyme catalyses octadecanoyl-CoA + NADP(+) = (2E)-octadecenoyl-CoA + NADPH + H(+). It catalyses the reaction (2E,7Z,10Z,13Z,16Z)-docosapentaenoyl-CoA + NADPH + H(+) = (7Z,10Z,13Z,16Z)-docosatetraenoyl-CoA + NADP(+). It carries out the reaction (2E,7Z,10Z,13Z,16Z,19Z)-docosahexaenoyl-CoA + NADPH + H(+) = (7Z,10Z,13Z,16Z,19Z)-docosapentaenoyl-CoA + NADP(+). The catalysed reaction is (2E,8Z,11Z,14Z)-eicosatetraenoyl-CoA + NADPH + H(+) = (8Z,11Z,14Z)-eicosatrienoyl-CoA + NADP(+). The enzyme catalyses (2E)-hexadecenoyl-CoA + NADPH + H(+) = hexadecanoyl-CoA + NADP(+). It participates in lipid metabolism; fatty acid biosynthesis. Its pathway is lipid metabolism; sphingolipid metabolism. Its function is as follows. Involved in both the production of very long-chain fatty acids for sphingolipid synthesis and the degradation of the sphingosine moiety in sphingolipids through the sphingosine 1-phosphate metabolic pathway. Catalyzes the last of the four reactions of the long-chain fatty acids elongation cycle. This endoplasmic reticulum-bound enzymatic process, allows the addition of 2 carbons to the chain of long- and very long-chain fatty acids/VLCFAs per cycle. This enzyme reduces the trans-2,3-enoyl-CoA fatty acid intermediate to an acyl-CoA that can be further elongated by entering a new cycle of elongation. Thereby, it participates in the production of VLCFAs of different chain lengths that are involved in multiple biological processes as precursors of membrane lipids and lipid mediators. Catalyzes the saturation step of the sphingosine 1-phosphate metabolic pathway, the conversion of trans-2-hexadecenoyl-CoA to palmitoyl-CoA. In Bos taurus (Bovine), this protein is Very-long-chain enoyl-CoA reductase (TECR).